Consider the following 471-residue polypeptide: Adenosylhomocysteinase (471 aa).

Substrate-binding residues include Thr-60, Asp-135, and Glu-196. An NAD(+)-binding site is contributed by 197–199 (TTT). Positions 226 and 230 each coordinate substrate. Residues Asn-231, 260–265 (GYGDVG), Glu-283, Asn-318, 339–341 (IGH), and Asn-387 contribute to the NAD(+) site.

Belongs to the adenosylhomocysteinase family. Requires NAD(+) as cofactor.

The protein resides in the cytoplasm. It catalyses the reaction S-adenosyl-L-homocysteine + H2O = L-homocysteine + adenosine. The protein operates within amino-acid biosynthesis; L-homocysteine biosynthesis; L-homocysteine from S-adenosyl-L-homocysteine: step 1/1. Functionally, may play a key role in the regulation of the intracellular concentration of adenosylhomocysteine. In Chlorobium limicola (strain DSM 245 / NBRC 103803 / 6330), this protein is Adenosylhomocysteinase.